The following is a 339-amino-acid chain: Adenylosuccinate synthetase (339 aa).

GTP is bound by residues Gly12–Ser18 and Gly42–Ser44. The active-site Proton acceptor is Asp13. Mg(2+) is bound by residues Asp13 and Gly42. Residues Asp13–Lys16, Asn40–His43, Thr127, Arg141, Gln179, Thr194, and Arg256 each bind IMP. Catalysis depends on His43, which acts as the Proton donor. Thr252–Arg258 is a substrate binding site. GTP is bound by residues Arg258, Met284–Asp286, and Lys324–Gly326.

It belongs to the adenylosuccinate synthetase family. Homodimer. Mg(2+) serves as cofactor.

The protein localises to the cytoplasm. It carries out the reaction IMP + L-aspartate + GTP = N(6)-(1,2-dicarboxyethyl)-AMP + GDP + phosphate + 2 H(+). The protein operates within purine metabolism; AMP biosynthesis via de novo pathway; AMP from IMP: step 1/2. Functionally, plays an important role in the de novo pathway of purine nucleotide biosynthesis. Catalyzes the first committed step in the biosynthesis of AMP from IMP. This chain is Adenylosuccinate synthetase, found in Pyrococcus sp. (strain ST700).